A 140-amino-acid chain; its full sequence is 3-hydroxyacyl-[acyl-carrier-protein] dehydratase FabZ (140 aa).

Histidine 48 is an active-site residue.

Belongs to the thioester dehydratase family. FabZ subfamily.

It is found in the cytoplasm. It carries out the reaction a (3R)-hydroxyacyl-[ACP] = a (2E)-enoyl-[ACP] + H2O. Involved in unsaturated fatty acids biosynthesis. Catalyzes the dehydration of short chain beta-hydroxyacyl-ACPs and long chain saturated and unsaturated beta-hydroxyacyl-ACPs. The protein is 3-hydroxyacyl-[acyl-carrier-protein] dehydratase FabZ of Halalkalibacterium halodurans (strain ATCC BAA-125 / DSM 18197 / FERM 7344 / JCM 9153 / C-125) (Bacillus halodurans).